Reading from the N-terminus, the 162-residue chain is Ribosome maturation factor RimP (162 aa).

Belongs to the RimP family.

It localises to the cytoplasm. Required for maturation of 30S ribosomal subunits. The sequence is that of Ribosome maturation factor RimP from Leptospira borgpetersenii serovar Hardjo-bovis (strain JB197).